A 657-amino-acid chain; its full sequence is MNNSGSGGSSPFVESPDLVSDGHLHTERKDTPIDVDNWKYKYDNLLNQYEIEKVRWQKEQYDSEKSHEALHLQLEKARNEIDQLVESKRFLEAQLQSQHPQNTQKEWSHEDNKVNNNSMNNDYMLLEEKYKSDVFHLDNSVNELKLELTSCRSLLKKYEEVIEQQSEQIKEIKKTLKKKEQELDEIEVNRLKQAHNATNTEEIRQQTNENASFSNGYNTLMSMKNSVNYWKNENQQLNQKLSEYSDIYQQLQEAQLEIMELKANLEEWNKFLSNKKQQDNSNDYSIDHFIIEFESQRRELNMVTEELAEVKKSYYNSKILNDELALERNQLLKLKDDYENNIINLEKLNHELEQQKVLLEEECSLLKNQIPTKENLNQQIRSTNRNDAEYDSLLDNYKQETENLTNELKRLNDSLIEQNRNQGTEMKKRKLRNGDHININYSQRLNELQQNNLSLEKDNEKLRLVVEKLEGKLDDLRKTKPKNIRILQQRDSPLLKLQFVRRKENELLREENQNLLTMIENITENRNESFDKIPLTSYNSLKYQYEISMDTNKKQEKKFSRLKQIFNKKSLEFIDVVNSLLGFKLEFQQDGRVKIYSCYMPNKYLIANLVDNTLKSNLDTVISDWDSLLNDWVVEKGQLPCFLASLTLQLWKMENDS.

Disordered regions lie at residues 1 to 29 (MNNS…TERK) and 96 to 116 (QSQH…KVNN). Over residues 20–29 (SDGHLHTERK) the composition is skewed to basic and acidic residues. Coiled-coil stretches lie at residues 46-99 (LNQY…QSQH) and 136-533 (HLDN…FDKI). The span at 96-105 (QSQHPQNTQK) shows a compositional bias: polar residues.

This sequence belongs to the MAD1 family.

The protein localises to the nucleus. Functionally, central component of the spindle assembly checkpoint. This Candida glabrata (strain ATCC 2001 / BCRC 20586 / JCM 3761 / NBRC 0622 / NRRL Y-65 / CBS 138) (Yeast) protein is Spindle assembly checkpoint component MAD1 (MAD1).